The primary structure comprises 133 residues: Protein archease (133 aa).

Ca(2+) contacts are provided by Asp-11, Asp-132, and Leu-133.

This sequence belongs to the archease family.

Functionally, activates the tRNA-splicing ligase complex by facilitating the enzymatic turnover of catalytic subunit RtcB. Acts by promoting the guanylylation of RtcB, a key intermediate step in tRNA ligation. Can also alter the NTP specificity of RtcB such that ATP, dGTP or ITP is used efficiently. The sequence is that of Protein archease from Thermoplasma volcanium (strain ATCC 51530 / DSM 4299 / JCM 9571 / NBRC 15438 / GSS1).